The primary structure comprises 135 residues: UPF0201 protein TON_1346 (135 aa).

This sequence belongs to the UPF0201 family.

This is UPF0201 protein TON_1346 from Thermococcus onnurineus (strain NA1).